Consider the following 350-residue polypeptide: S-adenosylmethionine:tRNA ribosyltransferase-isomerase (350 aa).

The protein belongs to the QueA family. As to quaternary structure, monomer.

Its subcellular location is the cytoplasm. It carries out the reaction 7-aminomethyl-7-carbaguanosine(34) in tRNA + S-adenosyl-L-methionine = epoxyqueuosine(34) in tRNA + adenine + L-methionine + 2 H(+). It participates in tRNA modification; tRNA-queuosine biosynthesis. In terms of biological role, transfers and isomerizes the ribose moiety from AdoMet to the 7-aminomethyl group of 7-deazaguanine (preQ1-tRNA) to give epoxyqueuosine (oQ-tRNA). This is S-adenosylmethionine:tRNA ribosyltransferase-isomerase from Bacillus cytotoxicus (strain DSM 22905 / CIP 110041 / 391-98 / NVH 391-98).